The following is a 510-amino-acid chain: Olfactomedin-4 (510 aa).

The N-terminal stretch at 1 to 20 is a signal peptide; that stretch reads MRPGLSFLLALLFFLGQAAG. Residues asparagine 72 and asparagine 136 are each glycosylated (N-linked (GlcNAc...) asparagine). Positions 155–234 form a coiled coil; it reads DFELIKVEVK…ECEASKDQNT (80 aa). The Olfactomedin-like domain occupies 245-507; it reads SCGHGGVVNI…LLNYDLSVLQ (263 aa). Cysteine 246 and cysteine 437 form a disulfide bridge. Asparagine 253 is a glycosylation site (N-linked (GlcNAc...) asparagine).

In terms of assembly, homomultimer; disulfide-linked. Interacts with NDUFA13. Interacts with cell surface lectins (locutions ricinus communis agglutinin I, concanavalin-A and wheat germ agglutinin) and cadherin. Post-translationally, N-glycosylated. In terms of tissue distribution, expressed during myeloid lineage development. Much higher expression in bone marrow neutrophils than in peripheral blood neutrophils (at protein level). Strongly expressed in the prostate, small intestine and colon and moderately expressed in the bone marrow and stomach. Overexpressed in some pancreatic cancer tissues.

Its subcellular location is the secreted. The protein localises to the extracellular space. It localises to the mitochondrion. Functionally, may promote proliferation of pancreatic cancer cells by favoring the transition from the S to G2/M phase. In myeloid leukemic cell lines, inhibits cell growth and induces cell differentiation and apoptosis. May play a role in the inhibition of EIF4EBP1 phosphorylation/deactivation. Facilitates cell adhesion, most probably through interaction with cell surface lectins and cadherin. This Homo sapiens (Human) protein is Olfactomedin-4 (OLFM4).